The following is a 191-amino-acid chain: Protein Ves (191 aa).

Belongs to the Ves family.

The sequence is that of Protein Ves from Escherichia coli (strain SE11).